The sequence spans 113 residues: Large ribosomal subunit protein uL22 (113 aa).

The protein belongs to the universal ribosomal protein uL22 family. As to quaternary structure, part of the 50S ribosomal subunit.

In terms of biological role, this protein binds specifically to 23S rRNA; its binding is stimulated by other ribosomal proteins, e.g. L4, L17, and L20. It is important during the early stages of 50S assembly. It makes multiple contacts with different domains of the 23S rRNA in the assembled 50S subunit and ribosome. The globular domain of the protein is located near the polypeptide exit tunnel on the outside of the subunit, while an extended beta-hairpin is found that lines the wall of the exit tunnel in the center of the 70S ribosome. In Desulforudis audaxviator (strain MP104C), this protein is Large ribosomal subunit protein uL22.